The primary structure comprises 396 residues: Dihydrolipoyllysine-residue acetyltransferase component of pyruvate dehydrogenase complex (396 aa).

The Lipoyl-binding domain maps to 1–69 (MPDIGLEEVE…KTDALIMRCE (69 aa)). Lysine 35 is modified (N6-lipoyllysine). The region spanning 104-141 (HATPLIRRLARNLNINLYDVVGTGPKNRILKEDLDLYQ) is the Peripheral subunit-binding (PSBD) domain. Residue histidine 369 is part of the active site.

Belongs to the 2-oxoacid dehydrogenase family. In terms of assembly, forms a 24-polypeptide structural core with octahedral symmetry. It depends on (R)-lipoate as a cofactor.

It carries out the reaction N(6)-[(R)-dihydrolipoyl]-L-lysyl-[protein] + acetyl-CoA = N(6)-[(R)-S(8)-acetyldihydrolipoyl]-L-lysyl-[protein] + CoA. In terms of biological role, the pyruvate dehydrogenase complex catalyzes the overall conversion of pyruvate to acetyl-CoA and CO(2). It contains multiple copies of three enzymatic components: pyruvate dehydrogenase (E1), dihydrolipoamide acetyltransferase (E2) and lipoamide dehydrogenase (E3). This chain is Dihydrolipoyllysine-residue acetyltransferase component of pyruvate dehydrogenase complex (aceF), found in Buchnera aphidicola subsp. Acyrthosiphon pisum (strain APS) (Acyrthosiphon pisum symbiotic bacterium).